An 825-amino-acid chain; its full sequence is ATP-dependent RNA helicase DBP4 (825 aa).

The interval 1 to 34 (MAAGNAKGGFAHRNKSVPKKTDAKSLKRKRGQED) is disordered. The span at 19–34 (KKTDAKSLKRKRGQED) shows a compositional bias: basic and acidic residues. Residues 53–81 (KQFTDLPLCEATASGLRASHFEVLTDVQR) carry the Q motif motif. Positions 84–258 (IPLALKGRDI…RLSLKEPEYV (175 aa)) constitute a Helicase ATP-binding domain. 97–104 (AKTGSGKT) contributes to the ATP binding site. The short motif at 206-209 (DEAD) is the DEAD box element. Residues 284–439 (KLDTLFGFLR…NKKKSIKNEL (156 aa)) form the Helicase C-terminal domain. Disordered stretches follow at residues 508 to 536 (NASR…KQVR) and 676 to 825 (AESE…LLED). 2 stretches are compositionally biased toward basic and acidic residues: residues 677 to 691 (ESEK…DKQA) and 700 to 714 (RERQ…ELER). Acidic residues-rich tracts occupy residues 730-739 (GEGDEGDEDP), 761-770 (GEDEGDDGEV), and 805-816 (MAEEPENLEDLE).

The protein belongs to the DEAD box helicase family. DDX10/DBP4 subfamily. As to quaternary structure, interacts with the U3 and U14 snoRNAs. Associates with pre-ribosomal complexes.

The protein resides in the nucleus. Its subcellular location is the nucleolus. It carries out the reaction ATP + H2O = ADP + phosphate + H(+). In terms of biological role, ATP-dependent RNA helicase required for ribosome biogenesis. Involved in the release of U14 snoRNA in pre-ribosomal complexes. Required for pre-rRNA cleavage at site A2. The chain is ATP-dependent RNA helicase DBP4 (DBP4) from Chaetomium globosum (strain ATCC 6205 / CBS 148.51 / DSM 1962 / NBRC 6347 / NRRL 1970) (Soil fungus).